The sequence spans 815 residues: Polyribonucleotide nucleotidyltransferase (815 aa).

Mg(2+) is bound by residues Asp489 and Asp495. Positions 556 to 615 constitute a KH domain; the sequence is PRFYTLQIPTDKIRDLIGPGGKVIRGIVEATGVKIDVEDSGKVNVASSDQEAAKKALKMI. The S1 motif domain occupies 625–692; it reads GKTYLGTVTR…DGNRIKLSRK (68 aa). The tract at residues 700-815 is disordered; that stretch reads AKMATEGGGD…GGGGGGRGRG (116 aa). A compositionally biased stretch (gly residues) spans 723 to 734; the sequence is APGGVTFEGGYE. Residues 735–745 are compositionally biased toward acidic residues; the sequence is GGDEPEVEEGE. The span at 775–815 shows a compositional bias: gly residues; the sequence is PHGGGGGAGRGGRGRRPGGGGGGGRGGHGGRGGGGGGRGRG.

It belongs to the polyribonucleotide nucleotidyltransferase family. Mg(2+) is required as a cofactor.

It localises to the cytoplasm. It catalyses the reaction RNA(n+1) + phosphate = RNA(n) + a ribonucleoside 5'-diphosphate. Functionally, involved in mRNA degradation. Catalyzes the phosphorolysis of single-stranded polyribonucleotides processively in the 3'- to 5'-direction. The polypeptide is Polyribonucleotide nucleotidyltransferase (Koribacter versatilis (strain Ellin345)).